Consider the following 721-residue polypeptide: Polyribonucleotide nucleotidyltransferase (721 aa).

Residues Asp495 and Asp501 each contribute to the Mg(2+) site. Residues 562–621 (PRITTIKIRPERIKDIIGPGGKTIKDITARTGTSINIEDDGSVSIASPNQDKVEEAIKMI) enclose the KH domain. The region spanning 631-699 (GRIYLGTVRK…RSGKIRLSRK (69 aa)) is the S1 motif domain. Residues 699–721 (KEALADSAKKSEGTEPPKGEPAK) form a disordered region.

Belongs to the polyribonucleotide nucleotidyltransferase family. Requires Mg(2+) as cofactor.

Its subcellular location is the cytoplasm. The enzyme catalyses RNA(n+1) + phosphate = RNA(n) + a ribonucleoside 5'-diphosphate. In terms of biological role, involved in mRNA degradation. Catalyzes the phosphorolysis of single-stranded polyribonucleotides processively in the 3'- to 5'-direction. The protein is Polyribonucleotide nucleotidyltransferase of Anaeromyxobacter sp. (strain K).